The sequence spans 53 residues: UPF0391 membrane protein TM1040_2720 (53 aa).

Transmembrane regions (helical) follow at residues 4–24 (WALA…GGIA) and 29–48 (GIAQ…ALIL).

This sequence belongs to the UPF0391 family.

The protein resides in the cell membrane. The protein is UPF0391 membrane protein TM1040_2720 of Ruegeria sp. (strain TM1040) (Silicibacter sp.).